Reading from the N-terminus, the 30-residue chain is Thrombin-like enzyme LmrSP-2 (30 aa).

The protein belongs to the peptidase S1 family. Snake venom subfamily. As to expression, expressed by the venom gland.

It localises to the secreted. Its function is as follows. Thrombin-like snake venom serine protease that cleaves alpha-chain of fibrinogen (FGA) releases only fibrinopeptide A. Shows coagulant, esterase and amidase activities. The chain is Thrombin-like enzyme LmrSP-2 from Lachesis muta rhombeata (Bushmaster).